The chain runs to 584 residues: DNA mismatch repair protein MutL (584 aa).

This sequence belongs to the DNA mismatch repair MutL/HexB family.

Functionally, this protein is involved in the repair of mismatches in DNA. It is required for dam-dependent methyl-directed DNA mismatch repair. May act as a 'molecular matchmaker', a protein that promotes the formation of a stable complex between two or more DNA-binding proteins in an ATP-dependent manner without itself being part of a final effector complex. This chain is DNA mismatch repair protein MutL, found in Buchnera aphidicola subsp. Acyrthosiphon pisum (strain Tuc7).